The primary structure comprises 762 residues: Chondroadherin-like protein (762 aa).

A signal peptide spans 1 to 30 (MEGPRSSTHVPLVLPLLVLLLLAPARQAAA). An LRRNT 1 domain is found at 31–62 (QRCPQACICDNSRRHVACRYQNLTEVPDAIPE). N-linked (GlcNAc...) asparagine glycosylation occurs at Asn52. LRR repeat units follow at residues 87–108 (HLTHLDLRHCEVELVAEGAFRG), 111–132 (RLLLLNLASNHLRELPQEALDG), 135–156 (SLRRLELEGNALEELRPGTFGA), 159–180 (ALATLNLAHNALVYLPAMAFQG), 183–204 (RVRWLRLSHNALSVLAPEALAG), 207–228 (ALRRLSLHHNELQALPGPVLSQ), 231–252 (GLARLELGHNPLTYAGEEDGLA), 255–276 (GLRELLLDGGALQALGPRAFAH), and 279–300 (RLHTLDLRGNQLDTLPPLQGPG). Positions 310–359 (NPLWCGCQARPLLEWLARARVRSDGACQGPRRLRGEALDALRPWDLRCPG) constitute an LRRCT 1 domain. Residues 364-390 (EEEELEERAVAGPRAPPRGPPRGPGEE) are disordered. Pro residues predominate over residues 377 to 386 (RAPPRGPPRG). Positions 387–425 (PGEERAVAPCPRACVCVPESRHSSCEGCGLQAVPRGFPS) constitute an LRRNT 2 domain. Cys396 and Cys411 are joined by a disulfide. 10 LRR repeats span residues 426-447 (DTQLLDLRRNHFPSVPRAAFPG), 450-471 (HLVSLHLQHCGIAELEAGALAG), 474-495 (RLIYLYLSDNQLAGLSAAALEG), 498-519 (RLGYLYLERNRFLQVPGAALRA), 522-543 (SLFSLHLQDNAVDRLAPGDLGR), 546-566 (ALRWVYLSGNRITEVSLGALG), 570-591 (ELEKLHLDRNQLREVPTGALEG), 594-615 (ALLELQLSGNPLRALRDGAFQP), 619-640 (SLQHLFLNSSGLEQICPGAFSG), and 644-665 (GLQSLHLQKNQLRALPALPSLS). The N-linked (GlcNAc...) asparagine glycan is linked to Asn626. An LRRCT 2 domain is found at 675-724 (NPFHCDCQLLPLHRWLTGLNLRVGATCATPPNARGQRVKAAAAVFEDCPG). 2 disulfides stabilise this stretch: Cys679–Cys722 and Cys681–Cys701. Residues 728 to 745 (RKAKRTPASRPSARRTPI) are compositionally biased toward basic residues. The tract at residues 728–762 (RKAKRTPASRPSARRTPIKGRQCGADKVGKEKGRL) is disordered.

It belongs to the small leucine-rich proteoglycan (SLRP) family. SLRP class IV subfamily. In terms of assembly, associates with collagen and binds to collagen fibrils.

The protein resides in the secreted. It is found in the extracellular space. Its subcellular location is the extracellular matrix. Its function is as follows. Potential negative modulator of chondrocyte differentiation. Inhibits collagen fibrillogenesis in vitro. May influence chondrocyte's differentiation by acting on its cellular collagenous microenvironment. In Homo sapiens (Human), this protein is Chondroadherin-like protein (CHADL).